Reading from the N-terminus, the 347-residue chain is TEGPDFYIPMVNTTGVVRSPYEYPQYYLVNPAAYAVLGAYMFFLIIVGFPINFLTLYVTLEHKKLRTPLNYILLNLAVADLFMVIGGFTTTMYSSMHGYFVLGRLGCNIEGFFATLGGMISLWSLAVLAIERWVVVCKPISNFRFGENHAIMGVSLTWVMALACTVPPLVGWSRYIPEGMQCACGIDYYTRAEGYNNESFVIYMFTFHFLFPMFIIFFCYGRLLCAVKEAAAAQQESETTQRAEREVTRMVILMVIGYLVCWLPYASVAWFIFTHKGSEFGPLFMAVPSFFAKSSSIYNPIIYICMNKQFRQCMITTLFCGKNPFEGQEEDSSTKTEASSASSVSPA.

The Extracellular portion of the chain corresponds to 1 to 33 (TEGPDFYIPMVNTTGVVRSPYEYPQYYLVNPAA). Asn12 carries N-linked (GlcNAc...) asparagine glycosylation. A helical transmembrane segment spans residues 34–58 (YAVLGAYMFFLIIVGFPINFLTLYV). Topologically, residues 59-70 (TLEHKKLRTPLN) are cytoplasmic. Residues 71-93 (YILLNLAVADLFMVIGGFTTTMY) traverse the membrane as a helical segment. Residues 94–107 (SSMHGYFVLGRLGC) are Extracellular-facing. An intrachain disulfide couples Cys107 to Cys184. The helical transmembrane segment at 108 to 130 (NIEGFFATLGGMISLWSLAVLAI) threads the bilayer. Positions 131-133 (ERW) match the 'Ionic lock' involved in activated form stabilization motif. The Cytoplasmic segment spans residues 131 to 149 (ERWVVVCKPISNFRFGENH). Residues 150–170 (AIMGVSLTWVMALACTVPPLV) traverse the membrane as a helical segment. At 171-199 (GWSRYIPEGMQCACGIDYYTRAEGYNNES) the chain is on the extracellular side. A glycan (N-linked (GlcNAc...) asparagine) is linked at Asn197. Residues 200–221 (FVIYMFTFHFLFPMFIIFFCYG) traverse the membrane as a helical segment. Residues 222–249 (RLLCAVKEAAAAQQESETTQRAEREVTR) lie on the Cytoplasmic side of the membrane. Residues 250–271 (MVILMVIGYLVCWLPYASVAWF) traverse the membrane as a helical segment. Residues 272-283 (IFTHKGSEFGPL) are Extracellular-facing. A helical transmembrane segment spans residues 284 to 305 (FMAVPSFFAKSSSIYNPIIYIC). Position 293 is an N6-(retinylidene)lysine (Lys293). The Cytoplasmic portion of the chain corresponds to 306 to 347 (MNKQFRQCMITTLFCGKNPFEGQEEDSSTKTEASSASSVSPA). Cys320 carries S-palmitoyl cysteine lipidation. Residues 326-347 (EGQEEDSSTKTEASSASSVSPA) are disordered. Low complexity predominate over residues 335-347 (KTEASSASSVSPA).

It belongs to the G-protein coupled receptor 1 family. Opsin subfamily. In terms of processing, phosphorylated on some or all of the serine and threonine residues present in the C-terminal region. Post-translationally, contains one covalently linked retinal chromophore.

Its subcellular location is the membrane. It is found in the cell projection. The protein localises to the cilium. The protein resides in the photoreceptor outer segment. Its function is as follows. Photoreceptor required for image-forming vision at low light intensity. While most salt water fish species use retinal as chromophore, most freshwater fish use 3-dehydroretinal, or a mixture of retinal and 3-dehydroretinal. Light-induced isomerization of 11-cis to all-trans retinal triggers a conformational change that activates signaling via G-proteins. Subsequent receptor phosphorylation mediates displacement of the bound G-protein alpha subunit by arrestin and terminates signaling. This Sargocentron spiniferum (Sabre squirrelfish) protein is Rhodopsin (rho).